The chain runs to 150 residues: Male-specific protein scotti (150 aa).

A disordered region spans residues 60-84; it reads PPMAVFPARGGPNGGPPRLRKKRSF. N-linked (GlcNAc...) asparagine glycosylation is present at Asn131.

The protein belongs to the male-specific scotti family.

Functionally, post-meiotically transcribed gene that has a role in late spermiogenesis; required for actin cone progression during spermatid individualization. This Drosophila yakuba (Fruit fly) protein is Male-specific protein scotti.